The chain runs to 232 residues: uncharacterized protein (232 aa).

Residues 119–145 (DEEYRENSKAPEAKARPSFVGEGRRLG) form a disordered region. Residues 123–133 (RENSKAPEAKA) show a composition bias toward basic and acidic residues.

This is an uncharacterized protein from Encephalitozoon cuniculi (strain GB-M1) (Microsporidian parasite).